The chain runs to 241 residues: Alpha/beta-tubulin-N-acetyltransferase 9 (241 aa).

The N-acetyltransferase domain maps to 34–181 (EELRHLTASE…VTLRLAVSEP (148 aa)).

This sequence belongs to the acetyltransferase family. GNAT subfamily.

It catalyses the reaction N-terminal L-methionyl-[tubulin] + acetyl-CoA = N-terminal N(alpha)-acetyl-L-methionyl-[tubulin] + CoA + H(+). Functionally, N-acetyltransferase that mediates the acetylation of the N-terminal residues of alpha- and beta-tubulin. The polypeptide is Alpha/beta-tubulin-N-acetyltransferase 9 (Nat9) (Mus musculus (Mouse)).